Here is a 318-residue protein sequence, read N- to C-terminus: GTP 3',8-cyclase (318 aa).

In terms of domain architecture, Radical SAM core spans 5–217; it reads KFERKIDYIR…DKIAKKYKFK (213 aa). Arg14 serves as a coordination point for GTP. Cys21 and Cys25 together coordinate [4Fe-4S] cluster. Tyr27 contributes to the S-adenosyl-L-methionine binding site. [4Fe-4S] cluster is bound at residue Cys28. Arg64 contributes to the GTP binding site. Gly68 is a binding site for S-adenosyl-L-methionine. Thr95 contributes to the GTP binding site. Ser119 serves as a coordination point for S-adenosyl-L-methionine. Lys155 contacts GTP. Met189 contacts S-adenosyl-L-methionine. Cys248 and Cys251 together coordinate [4Fe-4S] cluster. GTP is bound at residue 253-255; the sequence is RIR. [4Fe-4S] cluster is bound at residue Cys265.

This sequence belongs to the radical SAM superfamily. MoaA family. As to quaternary structure, monomer and homodimer. It depends on [4Fe-4S] cluster as a cofactor.

The enzyme catalyses GTP + AH2 + S-adenosyl-L-methionine = (8S)-3',8-cyclo-7,8-dihydroguanosine 5'-triphosphate + 5'-deoxyadenosine + L-methionine + A + H(+). The protein operates within cofactor biosynthesis; molybdopterin biosynthesis. In terms of biological role, catalyzes the cyclization of GTP to (8S)-3',8-cyclo-7,8-dihydroguanosine 5'-triphosphate. This Nautilia profundicola (strain ATCC BAA-1463 / DSM 18972 / AmH) protein is GTP 3',8-cyclase.